Here is a 284-residue protein sequence, read N- to C-terminus: Diaminopimelate epimerase (284 aa).

Residues N20, Q53, and N73 each coordinate substrate. The Proton donor role is filled by C82. Substrate contacts are provided by residues 83–84, N167, N200, and 218–219; these read GN and ER. The Proton acceptor role is filled by C227. 228–229 is a substrate binding site; the sequence is GS.

This sequence belongs to the diaminopimelate epimerase family. As to quaternary structure, homodimer.

Its subcellular location is the cytoplasm. The catalysed reaction is (2S,6S)-2,6-diaminopimelate = meso-2,6-diaminopimelate. It functions in the pathway amino-acid biosynthesis; L-lysine biosynthesis via DAP pathway; DL-2,6-diaminopimelate from LL-2,6-diaminopimelate: step 1/1. Its function is as follows. Catalyzes the stereoinversion of LL-2,6-diaminopimelate (L,L-DAP) to meso-diaminopimelate (meso-DAP), a precursor of L-lysine and an essential component of the bacterial peptidoglycan. The chain is Diaminopimelate epimerase from Xylella fastidiosa (strain M12).